Consider the following 469-residue polypeptide: UDP-N-acetylmuramate--L-alanine ligase (469 aa).

114–120 contributes to the ATP binding site; it reads GTHGKTT.

This sequence belongs to the MurCDEF family.

It localises to the cytoplasm. The catalysed reaction is UDP-N-acetyl-alpha-D-muramate + L-alanine + ATP = UDP-N-acetyl-alpha-D-muramoyl-L-alanine + ADP + phosphate + H(+). The protein operates within cell wall biogenesis; peptidoglycan biosynthesis. Cell wall formation. The sequence is that of UDP-N-acetylmuramate--L-alanine ligase from Sinorhizobium fredii (strain NBRC 101917 / NGR234).